The primary structure comprises 239 residues: mRNA turnover protein 4 homolog (239 aa).

The interval 215 to 239 is disordered; that stretch reads FQQMGDDLPESASESTEESDSEDDD. Residues serine 225, serine 229, and serine 233 each carry the phosphoserine modification. Positions 229-239 are enriched in acidic residues; that stretch reads STEESDSEDDD.

The protein belongs to the universal ribosomal protein uL10 family. As to quaternary structure, associates with the pre-60S ribosomal particle. Interacts with MINAS-60 (product of an alternative open reading frame of RBM10).

It localises to the nucleus. The protein resides in the nucleolus. It is found in the cytoplasm. Functionally, component of the ribosome assembly machinery. Nuclear paralog of the ribosomal protein P0, it binds pre-60S subunits at an early stage of assembly in the nucleolus, and is replaced by P0 in cytoplasmic pre-60S subunits and mature 80S ribosomes. The protein is mRNA turnover protein 4 homolog (MRTO4) of Homo sapiens (Human).